A 289-amino-acid polypeptide reads, in one-letter code: ATP synthase gamma chain (289 aa).

It belongs to the ATPase gamma chain family. As to quaternary structure, F-type ATPases have 2 components, CF(1) - the catalytic core - and CF(0) - the membrane proton channel. CF(1) has five subunits: alpha(3), beta(3), gamma(1), delta(1), epsilon(1). CF(0) has three main subunits: a, b and c.

The protein localises to the cell inner membrane. Produces ATP from ADP in the presence of a proton gradient across the membrane. The gamma chain is believed to be important in regulating ATPase activity and the flow of protons through the CF(0) complex. The polypeptide is ATP synthase gamma chain (Coxiella burnetii (strain CbuK_Q154) (Coxiella burnetii (strain Q154))).